Consider the following 138-residue polypeptide: Small ribosomal subunit protein uS11c (138 aa).

Residues 1–24 form a disordered region; that stretch reads MIKPIPRISSRRNGRIGSRKTGRR. Basic residues predominate over residues 9–24; the sequence is SSRRNGRIGSRKTGRR.

Belongs to the universal ribosomal protein uS11 family. In terms of assembly, part of the 30S ribosomal subunit.

Its subcellular location is the plastid. It localises to the chloroplast. In Lemna minor (Common duckweed), this protein is Small ribosomal subunit protein uS11c.